The primary structure comprises 57 residues: Conotoxin Cal6.39 (57 aa).

The N-terminal stretch at 1 to 18 (MSGTTVLLLTCLFLVTMA) is a signal peptide. Cystine bridges form between Cys22/Cys36, Cys29/Cys46, and Cys35/Cys52.

Expressed by the venom duct.

The protein resides in the secreted. In terms of biological role, probable neurotoxin. This Californiconus californicus (California cone) protein is Conotoxin Cal6.39.